Here is a 140-residue protein sequence, read N- to C-terminus: MRSFVTNNDIPVGYVTPKFPSLYWPINNSKYNTAFLYYISDIWKFSLYWTLIFNGAFYVTAGVYASLTHRKKAGSVWIFVMYVLYGGVQGLTTGTVMGFLIGAIYRSGLFSMSTWVPLCCAVVQILFDVVLSYSMVGSVM.

N-linked (GlcNAc...) asparagine glycosylation occurs at Asn27. 3 helical membrane-spanning segments follow: residues 45-65, 76-96, and 116-136; these read FSLYWTLIFNGAFYVTAGVYA, VWIFVMYVLYGGVQGLTTGTV, and VPLCCAVVQILFDVVLSYSMV.

It belongs to the TMEM170 family.

Its subcellular location is the membrane. This is an uncharacterized protein from Saccharomyces cerevisiae (strain ATCC 204508 / S288c) (Baker's yeast).